Consider the following 862-residue polypeptide: Alanine--tRNA ligase (862 aa).

Zn(2+) is bound by residues histidine 552, histidine 556, cysteine 653, and histidine 657.

It belongs to the class-II aminoacyl-tRNA synthetase family. The cofactor is Zn(2+).

It is found in the cytoplasm. The enzyme catalyses tRNA(Ala) + L-alanine + ATP = L-alanyl-tRNA(Ala) + AMP + diphosphate. Catalyzes the attachment of alanine to tRNA(Ala) in a two-step reaction: alanine is first activated by ATP to form Ala-AMP and then transferred to the acceptor end of tRNA(Ala). Also edits incorrectly charged Ser-tRNA(Ala) and Gly-tRNA(Ala) via its editing domain. The polypeptide is Alanine--tRNA ligase (Nitrosospira multiformis (strain ATCC 25196 / NCIMB 11849 / C 71)).